A 1241-amino-acid polypeptide reads, in one-letter code: High-affinity potassium transport protein (1241 aa).

Helical transmembrane passes span 49–70 (NFIA…ILLY) and 78–98 (IDAL…TVDV). A glycan (N-linked (GlcNAc...) asparagine) is linked at N100. Residues 107–127 (IILYIICCISTPIAVHSCLAF) form a helical membrane-spanning segment. 3 disordered regions span residues 162 to 241 (TART…SLDD), 253 to 316 (KYHG…TPED), and 329 to 570 (EGTA…QLQQ). Positions 164–177 (RTMTKSKTGGTQRV) are enriched in polar residues. Composition is skewed to basic and acidic residues over residues 181-191 (GKSDKRDDFQE) and 199-214 (VNRD…HNSR). Low complexity predominate over residues 215-238 (DSNSNANTNSSNNNSINHNGSSGS). N-linked (GlcNAc...) asparagine glycans are attached at residues N223, N227, N233, N257, N274, N353, and N364. 2 stretches are compositionally biased toward polar residues: residues 268–280 (NTAT…QKLK) and 345–365 (TDGT…TMNE). Residues 366–375 (SKIRIQDKGA) show a composition bias toward basic and acidic residues. The span at 380–411 (DQDSVLHSSNSSACTSDEDSLPTNFGGTTPSL) shows a compositional bias: polar residues. N-linked (GlcNAc...) asparagine glycans are attached at residues N389 and N442. Basic residues-rich tracts occupy residues 446–455 (PPRKASKSKR) and 482–497 (HLPK…KRRL). Residues 498–509 (STGSIDKNSSSD) are compositionally biased toward polar residues. 2 N-linked (GlcNAc...) asparagine glycosylation sites follow: N505 and N538. Residues 520-545 (NDDDDGNEGDNMEEYFADNESGDEDD) are compositionally biased toward acidic residues. Residues 561–570 (KQQQQHQLQQ) are compositionally biased toward low complexity. Residues N584, N660, N681, N691, and N741 are each glycosylated (N-linked (GlcNAc...) asparagine). The interval 677-714 (NSHRNGSEDVSSDSNETTYPLNGNNDHSQNDANGYPTY) is disordered. Polar residues predominate over residues 684-708 (EDVSSDSNETTYPLNGNNDHSQNDA). 5 helical membrane-spanning segments follow: residues 784–806 (ILVV…WINL), 819–840 (VSPT…GLTL), 844–864 (SMMS…FIII), 868–888 (GFPI…PDLS), and 904–924 (CFTL…LVGL). A glycan (N-linked (GlcNAc...) asparagine) is linked at N925. Helical transmembrane passes span 929 to 949 (WILF…SKGY) and 977 to 997 (SIQV…AISI). Residues 1011–1073 (YGEMGGKPED…ENENPNEEST (63 aa)) form a disordered region. Acidic residues predominate over residues 1021 to 1041 (TDTEEDGDCDDEDDDNEEEES). Residues 1050–1062 (GKSKKETKKKKKR) are compositionally biased toward basic residues. Helical transmembrane passes span 1084–1104 (QLSF…ICER) and 1117–1137 (VFTI…SLGY). N-linked (GlcNAc...) asparagine glycosylation occurs at N1141. Residues 1222-1241 (DELKHKRSLSRSSKRSTKTN) form a disordered region. The span at 1226-1241 (HKRSLSRSSKRSTKTN) shows a compositional bias: basic residues.

Belongs to the TrkH potassium transport family.

It localises to the membrane. Its function is as follows. This protein is required for high-affinity potassium transport. The sequence is that of High-affinity potassium transport protein (TRK1) from Saccharomyces uvarum (Yeast).